Here is a 261-residue protein sequence, read N- to C-terminus: NAD-capped RNA hydrolase NudC (261 aa).

Arg-69 is a binding site for substrate. Positions 98 and 101 each coordinate Zn(2+). Glu-111 contacts substrate. The Zn(2+) site is built by Cys-116 and Cys-119. Tyr-124 serves as a coordination point for substrate. Residues Pro-125–Thr-248 form the Nudix hydrolase domain. 3 residues coordinate a divalent metal cation: Ala-158, Glu-174, and Glu-178. The short motif at Gly-159 to Ser-180 is the Nudix box element. Substrate is bound at residue Gln-192–Ser-199. Glu-219 contacts a divalent metal cation. Ala-241 is a substrate binding site.

Belongs to the Nudix hydrolase family. NudC subfamily. In terms of assembly, homodimer. Mg(2+) serves as cofactor. It depends on Mn(2+) as a cofactor. Requires Zn(2+) as cofactor.

It catalyses the reaction a 5'-end NAD(+)-phospho-ribonucleoside in mRNA + H2O = a 5'-end phospho-adenosine-phospho-ribonucleoside in mRNA + beta-nicotinamide D-ribonucleotide + 2 H(+). It carries out the reaction NAD(+) + H2O = beta-nicotinamide D-ribonucleotide + AMP + 2 H(+). The enzyme catalyses NADH + H2O = reduced beta-nicotinamide D-ribonucleotide + AMP + 2 H(+). Its function is as follows. mRNA decapping enzyme that specifically removes the nicotinamide adenine dinucleotide (NAD) cap from a subset of mRNAs by hydrolyzing the diphosphate linkage to produce nicotinamide mononucleotide (NMN) and 5' monophosphate mRNA. The NAD-cap is present at the 5'-end of some mRNAs and stabilizes RNA against 5'-processing. Has preference for mRNAs with a 5'-end purine. Catalyzes the hydrolysis of a broad range of dinucleotide pyrophosphates. The sequence is that of NAD-capped RNA hydrolase NudC from Erwinia tasmaniensis (strain DSM 17950 / CFBP 7177 / CIP 109463 / NCPPB 4357 / Et1/99).